The sequence spans 612 residues: Phosphopentomutase (612 aa).

Position 2 is an N-acetylalanine (alanine 2). Arginine 63 and serine 165 together coordinate alpha-D-glucose 1,6-bisphosphate. Serine 165 (phosphoserine intermediate) is an active-site residue. The Mg(2+) site is built by serine 165, aspartate 322, aspartate 324, and aspartate 326. At serine 165 the chain carries Phosphoserine. 5 residues coordinate alpha-D-glucose 1,6-bisphosphate: aspartate 326, arginine 327, threonine 400, glutamate 424, and lysine 438.

Belongs to the phosphohexose mutase family. Monomer. It depends on Mg(2+) as a cofactor.

The protein localises to the cytoplasm. It localises to the cytosol. It catalyses the reaction alpha-D-ribose 1-phosphate = D-ribose 5-phosphate. The catalysed reaction is 2-deoxy-alpha-D-ribose 1-phosphate = 2-deoxy-D-ribose 5-phosphate. It carries out the reaction alpha-D-glucose 1-phosphate = alpha-D-glucose 6-phosphate. The enzyme catalyses O-phospho-L-seryl-[protein] + alpha-D-glucose 1-phosphate = alpha-D-glucose 1,6-bisphosphate + L-seryl-[protein]. It catalyses the reaction alpha-D-glucose 1,6-bisphosphate + L-seryl-[protein] = O-phospho-L-seryl-[protein] + alpha-D-glucose 6-phosphate. The phosphomutase activity is stimulated by glucose 1,6-bisphosphate. In terms of biological role, catalyzes the conversion of the nucleoside breakdown products ribose-1-phosphate and deoxyribose-1-phosphate to the corresponding 5-phosphopentoses. Catalyzes the reversible isomerization of alpha-D-glucose 1-phosphate to alpha-D-glucose 6-phosphate but with a lower catalytic efficiency. The mechanism proceeds via the intermediate compound alpha-D-glucose 1,6-bisphosphate. In vitro, also has a low glucose 1,6-bisphosphate synthase activity which is most probably not physiologically relevant. The polypeptide is Phosphopentomutase (Homo sapiens (Human)).